Reading from the N-terminus, the 294-residue chain is Release factor glutamine methyltransferase (294 aa).

Residues 131–135 (GTGSG), Asp-154, and Asn-202 contribute to the S-adenosyl-L-methionine site. 202–205 (NPPY) contacts substrate.

Belongs to the protein N5-glutamine methyltransferase family. PrmC subfamily.

It carries out the reaction L-glutaminyl-[peptide chain release factor] + S-adenosyl-L-methionine = N(5)-methyl-L-glutaminyl-[peptide chain release factor] + S-adenosyl-L-homocysteine + H(+). Functionally, methylates the class 1 translation termination release factors RF1/PrfA and RF2/PrfB on the glutamine residue of the universally conserved GGQ motif. In Chlorobaculum tepidum (strain ATCC 49652 / DSM 12025 / NBRC 103806 / TLS) (Chlorobium tepidum), this protein is Release factor glutamine methyltransferase.